The following is a 1128-amino-acid chain: Major DNA-binding protein (1128 aa).

The segment at 1104–1128 is required for nuclear localization; it reads LGGGGQGSGGRRKRRLATVLPGLEV.

Belongs to the herpesviridae major DNA-binding protein family. As to quaternary structure, homooligomers. Forms double-helical filaments necessary for the formation of replication compartments within the host nucleus. Interacts with the origin-binding protein. Interacts with the helicase primase complex; this interaction stimulates primer synthesis activity of the helicase-primase complex. Interacts with the DNA polymerase. Interacts with the alkaline exonuclease; this interaction increases its nuclease processivity.

It is found in the virion tegument. The protein resides in the host nucleus. In terms of biological role, plays several crucial roles in viral infection. Participates in the opening of the viral DNA origin to initiate replication by interacting with the origin-binding protein. May disrupt loops, hairpins and other secondary structures present on ssDNA to reduce and eliminate pausing of viral DNA polymerase at specific sites during elongation. Promotes viral DNA recombination by performing strand-transfer, characterized by the ability to transfer a DNA strand from a linear duplex to a complementary single-stranded DNA circle. Can also catalyze the renaturation of complementary single strands. Additionally, reorganizes the host cell nucleus, leading to the formation of prereplicative sites and replication compartments. This process is driven by the protein which can form double-helical filaments in the absence of DNA. The protein is Major DNA-binding protein of Epstein-Barr virus (strain GD1) (HHV-4).